Here is a 353-residue protein sequence, read N- to C-terminus: Glycerol-3-phosphate dehydrogenase [NAD(+)], cytoplasmic (353 aa).

At alanine 2 the chain carries Blocked amino end (Ala). Residues glycine 11–glycine 16, phenylalanine 98, lysine 121, and alanine 155 contribute to the NAD(+) site. Position 121 (lysine 121) interacts with substrate. Catalysis depends on lysine 206, which acts as the Proton acceptor. 2 residues coordinate NAD(+): arginine 270 and glutamine 299. A substrate-binding site is contributed by arginine 270–asparagine 271.

Belongs to the NAD-dependent glycerol-3-phosphate dehydrogenase family. As to quaternary structure, homodimer.

It localises to the cytoplasm. It catalyses the reaction sn-glycerol 3-phosphate + NAD(+) = dihydroxyacetone phosphate + NADH + H(+). It functions in the pathway phospholipid metabolism; alpha-glycerophosphate cycle. This is Glycerol-3-phosphate dehydrogenase [NAD(+)], cytoplasmic from Drosophila virilis (Fruit fly).